Reading from the N-terminus, the 107-residue chain is C-X-C motif chemokine 2 (107 aa).

A signal peptide spans 1–34 (MARATLSAAPSNPRLLRVALLLLLLVAASRRAAG). 2 disulfide bridges follow: cysteine 43–cysteine 69 and cysteine 45–cysteine 85.

The protein belongs to the intercrine alpha (chemokine CxC) family. The N-terminal processed form GRO-beta(5-73) is produced by proteolytic cleavage after secretion from bone marrow stromal cells.

It is found in the secreted. In terms of biological role, produced by activated monocytes and neutrophils and expressed at sites of inflammation. Hematoregulatory chemokine, which, in vitro, suppresses hematopoietic progenitor cell proliferation. GRO-beta(5-73) shows a highly enhanced hematopoietic activity. In Homo sapiens (Human), this protein is C-X-C motif chemokine 2 (CXCL2).